The following is a 458-amino-acid chain: RuvB-like helicase 1 (458 aa).

Residues 1–29 are disordered; that stretch reads MVQISEVKGNSRDNRTAAHTHIKGLGLRP. Residue 71–78 coordinates ATP; that stretch reads GGPGTGKT.

The protein belongs to the RuvB family. In terms of assembly, may form heterododecamers with RVB2. Component of the SWR1 chromatin remodeling complex, the INO80 chromatin remodeling complex, and of the R2TP complex.

The protein resides in the nucleus. The enzyme catalyses ATP + H2O = ADP + phosphate + H(+). DNA helicase which participates in several chromatin remodeling complexes, including the SWR1 and the INO80 complexes. The SWR1 complex mediates the ATP-dependent exchange of histone H2A for the H2A variant HZT1 leading to transcriptional regulation of selected genes by chromatin remodeling. The INO80 complex remodels chromatin by shifting nucleosomes and is involved in DNA repair. Also involved in pre-rRNA processing. This chain is RuvB-like helicase 1 (rvb1), found in Emericella nidulans (strain FGSC A4 / ATCC 38163 / CBS 112.46 / NRRL 194 / M139) (Aspergillus nidulans).